A 126-amino-acid polypeptide reads, in one-letter code: Large ribosomal subunit protein bL12 (126 aa).

This sequence belongs to the bacterial ribosomal protein bL12 family. In terms of assembly, homodimer. Part of the ribosomal stalk of the 50S ribosomal subunit. Forms a multimeric L10(L12)X complex, where L10 forms an elongated spine to which 2 to 4 L12 dimers bind in a sequential fashion. Binds GTP-bound translation factors.

Its function is as follows. Forms part of the ribosomal stalk which helps the ribosome interact with GTP-bound translation factors. Is thus essential for accurate translation. The protein is Large ribosomal subunit protein bL12 of Moorella thermoacetica (strain ATCC 39073 / JCM 9320).